The chain runs to 179 residues: Peptide deformylase 2 (179 aa).

Residues C104 and H146 each contribute to the Fe cation site. E147 is an active-site residue. Residue H150 coordinates Fe cation.

It belongs to the polypeptide deformylase family. The cofactor is Fe(2+).

It carries out the reaction N-terminal N-formyl-L-methionyl-[peptide] + H2O = N-terminal L-methionyl-[peptide] + formate. Functionally, removes the formyl group from the N-terminal Met of newly synthesized proteins. Requires at least a dipeptide for an efficient rate of reaction. N-terminal L-methionine is a prerequisite for activity but the enzyme has broad specificity at other positions. This Streptomyces coelicolor (strain ATCC BAA-471 / A3(2) / M145) protein is Peptide deformylase 2.